The following is a 102-amino-acid chain: Secretoglobin family 1D member (102 aa).

The signal sequence occupies residues Met1–Ala21. Residue Asn87 is glycosylated (N-linked (GlcNAc...) asparagine).

The protein belongs to the secretoglobin family. Lipophilin subfamily.

It is found in the secreted. In terms of biological role, may bind androgens and other steroids. May be under transcriptional regulation of steroid hormones. This Bos taurus (Bovine) protein is Secretoglobin family 1D member (SCGB1D).